Here is a 137-residue protein sequence, read N- to C-terminus: Phosphomevalonate dehydratase small subunit (137 aa).

Residue S62 is the Proton acceptor of the active site.

It belongs to the AcnX type II small subunit family. As to quaternary structure, heterodimer composed of a large subunit (PMDh-L) and a small subunit (PMDh-S).

The catalysed reaction is (R)-5-phosphomevalonate = (2E)-3-methyl-5-phosphooxypent-2-enoate + H2O. It participates in isoprenoid biosynthesis; isopentenyl diphosphate biosynthesis via mevalonate pathway. Component of a hydro-lyase that catalyzes the dehydration of mevalonate 5-phosphate (MVA5P) to form trans-anhydromevalonate 5-phosphate (tAHMP). Involved in the archaeal mevalonate (MVA) pathway, which provides fundamental precursors for isoprenoid biosynthesis, such as isopentenyl diphosphate (IPP) and dimethylallyl diphosphate (DMAPP). This is Phosphomevalonate dehydratase small subunit from Methanothrix thermoacetophila (strain DSM 6194 / JCM 14653 / NBRC 101360 / PT) (Methanosaeta thermophila).